Here is a 259-residue protein sequence, read N- to C-terminus: MASGDGANGGGGGGQGKLPRKRFYRARAHSNPLSDSHFPIPISPDEVDLSQHYPRYFPSGEGEARQGDAAVPRIRFADVGCGFGGLLVGLSTLFPDTLMIGMELRDKVTEYVKERILALRASNPGKYDNISVVRTNSMKYIPNYFRKAQLSKMFFLFPDPHFKEKNHRRRVISMQLLDEYAYVMEVGGIIYTITDVEELGEWMRSCLEKHPLFEAIPEEETKADPVVKLLSTATEEGQKVARNGGQTFQAIFRRISLQE.

Residues Gly80, 103 to 104 (EL), 136 to 137 (NS), and Leu156 contribute to the S-adenosyl-L-methionine site. Asp159 is a catalytic residue. 234-236 (TEE) provides a ligand contact to S-adenosyl-L-methionine.

Belongs to the class I-like SAM-binding methyltransferase superfamily. TrmB family.

The protein resides in the nucleus. It catalyses the reaction guanosine(46) in tRNA + S-adenosyl-L-methionine = N(7)-methylguanosine(46) in tRNA + S-adenosyl-L-homocysteine. It functions in the pathway tRNA modification; N(7)-methylguanine-tRNA biosynthesis. Functionally, catalyzes the formation of N(7)-methylguanine at position 46 (m7G46) in tRNA. This Oryza sativa subsp. indica (Rice) protein is tRNA (guanine-N(7)-)-methyltransferase.